We begin with the raw amino-acid sequence, 616 residues long: Elongation factor 4 (616 aa).

A tr-type G domain is found at 17–203; it reads ERIRNFCIIA…RVCELVPAPV (187 aa). Residues 29-34 and 150-153 contribute to the GTP site; these read DHGKST and NKID.

Belongs to the TRAFAC class translation factor GTPase superfamily. Classic translation factor GTPase family. LepA subfamily.

Its subcellular location is the cell membrane. The enzyme catalyses GTP + H2O = GDP + phosphate + H(+). In terms of biological role, required for accurate and efficient protein synthesis under certain stress conditions. May act as a fidelity factor of the translation reaction, by catalyzing a one-codon backward translocation of tRNAs on improperly translocated ribosomes. Back-translocation proceeds from a post-translocation (POST) complex to a pre-translocation (PRE) complex, thus giving elongation factor G a second chance to translocate the tRNAs correctly. Binds to ribosomes in a GTP-dependent manner. The sequence is that of Elongation factor 4 from Corynebacterium jeikeium (strain K411).